A 458-amino-acid chain; its full sequence is MRKFFGTDGIRGIVNEILTPELAYKLSRAIIGYFKDVKKKKVIIGSDTRNSKDMLKSALIAGFTSGGMDILDVGVVSTPSLSYLVKKYDDVLLGIMISASHNPVEYNGIKIFKSDGFKLEDNVEATIEEYILREDDYFRASPREIGVIYNFTQALEDYKNYLKEIIGEDFRGYKIMLDCAFGSLSEIAPTVFKELGAEVIAYNTNYNGININDNCGAVYPEIGRNLFLKSGAHIGFTYDGDGDRVIAFSEDGEIVDGDVLIGIFAKYLKERGLLRGNKIVGTVMTNLGLEEYLKRLGIGLIRAKVGDRYVLEEILKNNLNLGGETSGHIILFDYMPTGDGLLTSLFLLKILKERGIKLSDLAKEIRIFPQVHEKIHIKDIYITEEDEKEFRGIAEEVINGKNIRYIVRKSGTEPVIRITVEGDVPKEDLTNIALEIKNRIIDFLRRSKRQDLPSKGVS.

Catalysis depends on Ser100, which acts as the Phosphoserine intermediate. Residues Ser100, Asp239, Asp241, and Asp243 each coordinate Mg(2+). Ser100 carries the post-translational modification Phosphoserine.

The protein belongs to the phosphohexose mutase family. Requires Mg(2+) as cofactor. Activated by phosphorylation.

It catalyses the reaction alpha-D-glucosamine 1-phosphate = D-glucosamine 6-phosphate. Functionally, catalyzes the conversion of glucosamine-6-phosphate to glucosamine-1-phosphate. In Dictyoglomus thermophilum (strain ATCC 35947 / DSM 3960 / H-6-12), this protein is Phosphoglucosamine mutase.